Reading from the N-terminus, the 662-residue chain is Acyl-coenzyme A oxidase acox-1.4 (662 aa).

FAD-binding positions include 148-151 (YAQT), 156-157 (GT), and Gly-190. Substrate is bound by residues 284–287 (KVNH) and Arg-294. FAD is bound by residues Arg-319 and 339–342 (QQHR). ATP-binding residues include His-341, Ser-391, His-395, and Gln-403. Gly-410 lines the FAD pocket. 432–433 (YE) contributes to the substrate binding site. Glu-433 (proton acceptor) is an active-site residue. Glu-435 contacts FAD. Residues 526 to 529 (RASR) and Tyr-574 contribute to the ATP site. A Microbody targeting signal motif is present at residues 660-662 (AKL).

The protein belongs to the acyl-CoA oxidase family. Homodimer. It depends on FAD as a cofactor.

Its subcellular location is the peroxisome. The enzyme catalyses asc-C9-CoA + O2 = asc-DeltaC9-CoA + H2O2. It functions in the pathway lipid metabolism; peroxisomal fatty acid beta-oxidation. Activated by ATP. ATP binding leads to a conformational change that promotes FAD cofactor binding and enzyme activity. ATP binding likely occurs during acox-1.4 folding and/or dimer formation. Its function is as follows. Involved in the first step of peroxisomal beta-oxidation by catalyzing the desaturation of fatty acid-derived side chains of ascaroside pheromones, which regulates development and behavior. Specifically, shortens ascarosides with a 9-carbon side chain (asc-C9) and, in association with acox-1.1, may contribute to the shortening of ascarosides with a 11-carbon side chain (asc-C11). May contribute to the production of indol-3-carbonyl(IC)-ascarosides in association with acox-1.1 and acox-3. This chain is Acyl-coenzyme A oxidase acox-1.4, found in Caenorhabditis elegans.